The primary structure comprises 566 residues: APC/C activator protein CDH1 (566 aa).

Residues 1-18 (MSTNLNPFMNNTPSSSPL) show a composition bias toward polar residues. Residues 1–56 (MSTNLNPFMNNTPSSSPLKGSESKRVSKRPISSSSSASLLSSPSRRSRPSTVYGDR) are disordered. A compositionally biased stretch (low complexity) spans 29–44 (RPISSSSSASLLSSPS). Residues 55 to 61 (DRYIPSR) carry the C-box motif. Serine 213 bears the Phosphoserine mark. 7 WD repeats span residues 258-298 (PSLA…VVHL), 300-339 (DTEN…CIRT), 342-379 (GHID…PFFE), 383-422 (SHTQ…PILT), 425-467 (EHKA…KMSD), 469-510 (DSGS…PIAI), and 513-552 (GHSF…KAKV).

The protein belongs to the WD repeat CDC20/Fizzy family. In terms of assembly, associates with the APC/C complex. Interacts with CLB2, CLB3, CDC5, HSL1, MSN5 and PSE1. Post-translationally, phosphorylated at multiple sites by CDC28, probably in its CLB5 bound form, in S, G2 and M phase of the cell cycle, thereby blocking the association of CDH1 to the APC/C and promoting nuclear export of CDH1 by MSN5. Dephosphorylated and activated by CDC14 in late anaphase, which may be necessary for PSE1-dependent nuclear localization.

Its subcellular location is the cytoplasm. The protein localises to the nucleus. Its function is as follows. Activator protein that regulates the ubiquitin ligase activity and substrate specificity of the anaphase promoting complex/cyclosome (APC/C). During telophase and in the subsequent G1 phase of the cell cycle, recognizes and binds proteins containing a destruction box (D-box) and an additional degradation signal termed the KEN box including ASE1, CDC20, the B-type cyclins CLB2 and CLB3, the polo-like kinase CDC5 and HSL1, and recruits them in a C-box-dependent manner to the APC/C for ubiquitination and subsequent proteolysis. Required for exit from mitosis, cytokinesis and formation of prereplicative complexes in G1. Probably is the target of a BUB2-dependent spindle checkpoint pathway. This Saccharomyces cerevisiae (strain ATCC 204508 / S288c) (Baker's yeast) protein is APC/C activator protein CDH1 (CDH1).